Consider the following 641-residue polypeptide: Phosphomethylpyrimidine synthase (641 aa).

Substrate is bound by residues Asn-221, Met-250, Tyr-279, His-315, 335–337, 376–379, and Glu-415; these read SRG and DGLR. Residue His-419 participates in Zn(2+) binding. Residue Tyr-442 participates in substrate binding. His-483 lines the Zn(2+) pocket. [4Fe-4S] cluster contacts are provided by Cys-563, Cys-566, and Cys-571.

This sequence belongs to the ThiC family. As to quaternary structure, homodimer. [4Fe-4S] cluster is required as a cofactor.

It carries out the reaction 5-amino-1-(5-phospho-beta-D-ribosyl)imidazole + S-adenosyl-L-methionine = 4-amino-2-methyl-5-(phosphooxymethyl)pyrimidine + CO + 5'-deoxyadenosine + formate + L-methionine + 3 H(+). It participates in cofactor biosynthesis; thiamine diphosphate biosynthesis. Catalyzes the synthesis of the hydroxymethylpyrimidine phosphate (HMP-P) moiety of thiamine from aminoimidazole ribotide (AIR) in a radical S-adenosyl-L-methionine (SAM)-dependent reaction. This chain is Phosphomethylpyrimidine synthase, found in Rhodopseudomonas palustris (strain BisA53).